The sequence spans 525 residues: Vesicular inhibitory amino acid transporter (525 aa).

At 1–132 the chain is on the cytoplasmic side; the sequence is MATLLRSKLS…WNVTNAIQGM (132 aa). Residues 83–107 form a disordered region; sequence IHYQRGSGAPLPPSGSKDQVGGGGE. The chain crosses the membrane as a helical span at residues 133–153; that stretch reads FVLGLPYAILHGGYLGLFLII. Residues 154–204 lie on the Lumenal, vesicle side of the membrane; sequence FAAVVCCYTGKILIACLYEENEDGEVVRVRDSYVAIANACCAPRFPTLGGR. Tyrosine 186 carries the post-translational modification 3'-nitrotyrosine. The helical transmembrane segment at 205–225 threads the bilayer; that stretch reads VVNVAQIIELVMTCILYVVVS. The Cytoplasmic segment spans residues 226-265; sequence GNLMYNSFPGLPVSQKSWSIIATAVLLPCAFLKNLKAVSK. A helical membrane pass occupies residues 266–286; that stretch reads FSLLCTLAHFVINILVIAYCL. Over 287–305 the chain is Lumenal, vesicle; the sequence is SRARDWAWEKVKFYIDVKK. Residues 306 to 326 traverse the membrane as a helical segment; sequence FPISIGIIVFSYTSQIFLPSL. Topologically, residues 327–341 are cytoplasmic; the sequence is EGNMQQPSEFHCMMN. The chain crosses the membrane as a helical span at residues 342 to 362; the sequence is WTHIAACVLKGLFALVAYLTW. Residues 363–383 are Lumenal, vesicle-facing; it reads ADETKEVITDNLPGSIRAVVN. A helical membrane pass occupies residues 384–404; sequence IFLVAKALLSYPLPFFAAVEV. The Cytoplasmic portion of the chain corresponds to 405–438; it reads LEKSLFQEGSRAFFPACYSGDGRLKSWGLTLRCA. Residues 439–459 form a helical membrane-spanning segment; it reads LVVFTLLMAIYVPHFALLMGL. Over 460–461 the chain is Lumenal, vesicle; that stretch reads TG. Residues 462 to 482 form a helical membrane-spanning segment; sequence SLTGAGLCFLLPSLFHLRLLW. Topologically, residues 483 to 489 are cytoplasmic; it reads RKLLWHQ. A helical transmembrane segment spans residues 490–510; sequence VFFDVAIFVIGGICSVSGFVH. The Lumenal, vesicle portion of the chain corresponds to 511 to 525; it reads SLEGLIEAYRTNAED.

This sequence belongs to the amino acid/polyamine transporter 2 family. In terms of tissue distribution, retina. Expressed throughout the horizontal cells or more specifically at the terminals.

It is found in the cytoplasmic vesicle membrane. The protein localises to the presynapse. The catalysed reaction is 4-aminobutanoate(out) + n H(+)(in) = 4-aminobutanoate(in) + n H(+)(out). It catalyses the reaction glycine(out) + n H(+)(in) = glycine(in) + n H(+)(out). It carries out the reaction beta-alanine(out) + n H(+)(in) = beta-alanine(in) + n H(+)(out). Functionally, antiporter that exchanges vesicular protons for cytosolic 4-aminobutanoate or to a lesser extend glycine, thus allowing their secretion from nerve terminals. The transport is equally dependent on the chemical and electrical components of the proton gradient. May also transport beta-alanine. Acidification of GABAergic synaptic vesicles is a prerequisite for 4-aminobutanoate uptake. This chain is Vesicular inhibitory amino acid transporter, found in Homo sapiens (Human).